A 330-amino-acid polypeptide reads, in one-letter code: Putative 4-hydroxythreonine-4-phosphate dehydrogenase (330 aa).

Residues His-169, His-213, and His-263 each coordinate a divalent metal cation.

This sequence belongs to the PdxA family. In terms of assembly, homodimer. Requires Zn(2+) as cofactor. Mg(2+) serves as cofactor. It depends on Co(2+) as a cofactor.

Its subcellular location is the cytoplasm. It catalyses the reaction 4-(phosphooxy)-L-threonine + NAD(+) = 3-amino-2-oxopropyl phosphate + CO2 + NADH. The protein operates within cofactor biosynthesis; pyridoxine 5'-phosphate biosynthesis; pyridoxine 5'-phosphate from D-erythrose 4-phosphate: step 4/5. Functionally, catalyzes the NAD(P)-dependent oxidation of 4-(phosphooxy)-L-threonine (HTP) into 2-amino-3-oxo-4-(phosphooxy)butyric acid which spontaneously decarboxylates to form 3-amino-2-oxopropyl phosphate (AHAP). This Novosphingobium aromaticivorans (Sphingomonas aromaticivorans) protein is Putative 4-hydroxythreonine-4-phosphate dehydrogenase.